The chain runs to 79 residues: MSFEVFEKLEAKVQQAIDTITLLQMEIEELKEQNNALSQDVQAAAGSREALVRENEQLKEEQVVWQERLRALLGKMEEV.

Positions E4–E78 form a coiled coil.

Belongs to the ZapB family. Homodimer. The ends of the coiled-coil dimer bind to each other, forming polymers. Interacts with FtsZ.

The protein resides in the cytoplasm. Its function is as follows. Non-essential, abundant cell division factor that is required for proper Z-ring formation. It is recruited early to the divisome by direct interaction with FtsZ, stimulating Z-ring assembly and thereby promoting cell division earlier in the cell cycle. Its recruitment to the Z-ring requires functional FtsA or ZipA. The chain is Cell division protein ZapB from Pectobacterium carotovorum subsp. carotovorum (strain PC1).